An 843-amino-acid polypeptide reads, in one-letter code: Protein P (843 aa).

A terminal protein domain (TP) region spans residues 1-177 (MPLSYQHFRK…FCGSPYSWEQ (177 aa)). The spacer stretch occupies residues 178–346 (DLQHGRLVIQ…YCLCHIVNLI (169 aa)). Disordered stretches follow at residues 219-258 (RKSR…VGVE) and 297-316 (SSGH…RSQS). The tract at residues 347–690 (DDWGPCAEHG…YLNLYPVARQ (344 aa)) is polymerase/reverse transcriptase domain (RT). The Reverse transcriptase domain occupies 357 to 600 (EHRIRTPRTP…YSLNFMGYVI (244 aa)). Residues aspartate 429, aspartate 551, and aspartate 552 each coordinate Mg(2+).

It belongs to the hepadnaviridae P protein family.

It catalyses the reaction DNA(n) + a 2'-deoxyribonucleoside 5'-triphosphate = DNA(n+1) + diphosphate. The enzyme catalyses Endonucleolytic cleavage to 5'-phosphomonoester.. With respect to regulation, activated by host HSP70 and HSP40 in vitro to be able to bind the epsilon loop of the pgRNA. Because deletion of the RNase H region renders the protein partly chaperone-independent, the chaperones may be needed indirectly to relieve occlusion of the RNA-binding site by this domain. Inhibited by several reverse-transcriptase inhibitors: Lamivudine, Adefovir and Entecavir. Multifunctional enzyme that converts the viral RNA genome into dsDNA in viral cytoplasmic capsids. This enzyme displays a DNA polymerase activity that can copy either DNA or RNA templates, and a ribonuclease H (RNase H) activity that cleaves the RNA strand of RNA-DNA heteroduplexes in a partially processive 3'- to 5'-endonucleasic mode. Neo-synthesized pregenomic RNA (pgRNA) are encapsidated together with the P protein, and reverse-transcribed inside the nucleocapsid. Initiation of reverse-transcription occurs first by binding the epsilon loop on the pgRNA genome, and is initiated by protein priming, thereby the 5'-end of (-)DNA is covalently linked to P protein. Partial (+)DNA is synthesized from the (-)DNA template and generates the relaxed circular DNA (RC-DNA) genome. After budding and infection, the RC-DNA migrates in the nucleus, and is converted into a plasmid-like covalently closed circular DNA (cccDNA). The activity of P protein does not seem to be necessary for cccDNA generation, and is presumably released from (+)DNA by host nuclear DNA repair machinery. In Hepatitis B virus genotype B1 (isolate Japan/Ry30/2002) (HBV-B), this protein is Protein P.